The primary structure comprises 426 residues: Torsin-4A (426 aa).

The disordered stretch occupies residues 41-60 (QPGTEPDSGTGTLGPTGSLG). Low complexity predominate over residues 48 to 60 (SGTGTLGPTGSLG). Residues Ser58 and Ser76 each carry the phosphoserine modification. At Thr84 the chain carries Phosphothreonine. Ser101 carries the phosphoserine modification. Residues 117–133 (CLLLLVAIVGFQVLNAI) form a helical membrane-spanning segment. ATP is bound at residue 189 to 196 (GPSGVGKS).

It belongs to the ClpA/ClpB family. Torsin subfamily.

The protein resides in the membrane. This is Torsin-4A (Tor4a) from Mus musculus (Mouse).